Reading from the N-terminus, the 523-residue chain is ATP-dependent RNA helicase DBP3 (523 aa).

Residues 1-21 (MTKEEIADKKRKVVDEEVIEK) show a composition bias toward basic and acidic residues. The interval 1 to 71 (MTKEEIADKK…SEKKPEPTSA (71 aa)) is disordered. Residues 22-48 (KKSKKHKKDKKDKKEKKDKKHKKHKKE) are compositionally biased toward basic residues. The segment covering 49-67 (KKGEKEVEVPEKESEKKPE) has biased composition (basic and acidic residues). A Q motif motif is present at residues 114 to 140 (LSFDYLSLDSSIQAEISKFPKPTPIQA). The 173-residue stretch at 143-315 (WPYLLSGKDV…STFMNNPIKV (173 aa)) folds into the Helicase ATP-binding domain. 156 to 163 (AETGSGKT) is an ATP binding site. A DEAD box motif is present at residues 262 to 265 (DEAD). One can recognise a Helicase C-terminal domain in the interval 344–493 (KLLELLKKYH…PVPEDLIKFG (150 aa)).

It belongs to the DEAD box helicase family. DDX5/DBP2 subfamily.

The protein resides in the nucleus. The protein localises to the nucleolus. The enzyme catalyses ATP + H2O = ADP + phosphate + H(+). ATP-dependent RNA helicase required for 60S ribosomal subunit synthesis. Involved in efficient pre-rRNA processing, predominantly at site A3, which is necessary for the normal formation of 25S and 5.8S rRNAs. This Saccharomyces cerevisiae (strain ATCC 204508 / S288c) (Baker's yeast) protein is ATP-dependent RNA helicase DBP3 (DBP3).